The chain runs to 405 residues: GTPase Obg (405 aa).

The 159-residue stretch at 1–159 (MRFIDEAVVT…KVLKFELKVV (159 aa)) folds into the Obg domain. The region spanning 160–333 (ADVGLIGLPN…IKYHLMNEIE (174 aa)) is the OBG-type G domain. GTP is bound by residues 166 to 173 (GLPNAGKS), 191 to 195 (FTTLV), 213 to 216 (DIPG), 283 to 286 (NKID), and 314 to 316 (ATL). Residues Ser173 and Thr193 each contribute to the Mg(2+) site. Residues 371–382 (YRAARKAAREGT) are compositionally biased toward basic and acidic residues. Residues 371–405 (YRAARKAAREGTDLSDDDFDDSDDDDDGVEVVYAP) are disordered. A compositionally biased stretch (acidic residues) spans 383-399 (DLSDDDFDDSDDDDDGV).

This sequence belongs to the TRAFAC class OBG-HflX-like GTPase superfamily. OBG GTPase family. Monomer. Mg(2+) is required as a cofactor.

Its subcellular location is the cytoplasm. In terms of biological role, an essential GTPase which binds GTP, GDP and possibly (p)ppGpp with moderate affinity, with high nucleotide exchange rates and a fairly low GTP hydrolysis rate. Plays a role in control of the cell cycle, stress response, ribosome biogenesis and in those bacteria that undergo differentiation, in morphogenesis control. This chain is GTPase Obg, found in Psychrobacter cryohalolentis (strain ATCC BAA-1226 / DSM 17306 / VKM B-2378 / K5).